A 22-amino-acid polypeptide reads, in one-letter code: Piscidin-3 (22 aa).

A Glycine amide modification is found at Gly22.

Belongs to the pleurocidin family. In terms of tissue distribution, mast cells in gill, skin and gut, and in lining blood vessels in the viscera.

It localises to the secreted. The protein localises to the membrane. Its function is as follows. Antimicrobial peptide with broad-spectrum activity against Gram-positive and Gram-negative bacteria. Rapidly inactivates both channel catfish herpesvirus (ED(50)=11 uM) and frog virus 3 (ED(50)=16 uM) over a wide temperature range. Has hemolytic activity. The protein is Piscidin-3 of Morone chrysops x Morone saxatilis (White bass x Striped bass).